Here is a 559-residue protein sequence, read N- to C-terminus: Cytochrome P450 86B1 (559 aa).

Residues 31–51 (FLLRDVQILELLIAIFVFVAI) form a helical membrane-spanning segment. A heme-binding site is contributed by Cys-488.

This sequence belongs to the cytochrome P450 family. Requires heme as cofactor. In terms of tissue distribution, expressed in roots endodermis, anthers, stigmas, stomata of young pedicels of inflorescences, the placenta region of siliques, at the level of the hilum in matures seeds, at the junction of siliques to pedicels where abscission of floral parts takes place and in nectary glands.

It localises to the endoplasmic reticulum membrane. In terms of biological role, involved in very long chain fatty acids (VLCFA) omega-hydroxylation. Required for the synthesis of saturated VLCFA alpha, omega-bifunctional suberin monomers. This Arabidopsis thaliana (Mouse-ear cress) protein is Cytochrome P450 86B1 (CYP86B1).